Reading from the N-terminus, the 676-residue chain is Forkhead box protein biniou (676 aa).

Disordered stretches follow at residues 22–50 (YHDPRAHPPFSHPHAHSHPHQHTHTGHPY), 131–160 (AHSAGSASPQSNSKTPTDLPQDLQYASSST), 203–232 (QEQAGQQQPQQLPAQQLQHSPGGGYMSRIS), 249–312 (NYSS…PEKP), and 583–651 (IQHA…AYLP). Over residues 34 to 48 (PHAHSHPHQHTHTGH) the composition is skewed to basic residues. Residues 133–160 (SAGSASPQSNSKTPTDLPQDLQYASSST) are compositionally biased toward polar residues. Residues 203–220 (QEQAGQQQPQQLPAQQLQ) are compositionally biased toward low complexity. Polar residues predominate over residues 257 to 273 (PAKSLNGSESSPPSQNH). Positions 311–408 (KPALSYINMI…DEGSLRRRPR (98 aa)) form a DNA-binding region, fork-head. The segment covering 583–593 (IQHAQAQAQAQ) has biased composition (low complexity). Positions 594–611 (AHHHHHQHHASHPSHSHQ) are enriched in basic residues. The segment covering 612–625 (GHGSMHQNHGTSST) has biased composition (low complexity). The span at 637-647 (GIDHSPIDRKP) shows a compositional bias: basic and acidic residues.

As to quaternary structure, binds to DNA. In embryo, expressed in all types of visceral muscles and their progenitors (at protein level). In late stage 10 embryo, expressed in the caudal visceral mesoderm and trunk and hindgut visceral mesoderm progenitors.

The protein localises to the nucleus. In terms of biological role, component of a regulatory network controlling visceral mesoderm development and midgut morphogenesis. Transcriptional regulator involved in the activation of a large number of genes in the visceral mesoderm including betaTub60D, dpp and Hand. Binds to and regulates a number of enhancers driving expression in the visceral mesoderm in a temporally and spatially restricted manner. Also to binds to enhancers cooperatively with activators, such as bap or HLH54F, to coregulate expression of shared target genes in the visceral mesoderm. Binds to the Ndg enhancer and drives expression of Ndg in the late visceral musculature. May be involved in the transcriptional regulation of wupA in the visceral mesoderm. Plays an indirect role in the later stages of salivary gland positioning. The sequence is that of Forkhead box protein biniou (bin) from Drosophila melanogaster (Fruit fly).